The chain runs to 512 residues: Spastin homolog (512 aa).

Over 1–274 (MFAFSKGPAG…FKGLRQPVKG (274 aa)) the chain is Cytoplasmic. The stretch at 32–97 (IEMDELTKHA…MKLEKSAQDR (66 aa)) forms a coiled coil. Residues 110 to 182 (KQSRSATVGP…SDTVHPEPPV (73 aa)) form a disordered region. Residues 115–233 (ATVGPSRPAS…ERLLDEVLDN (119 aa)) form an MTBD region. Over residues 137 to 163 (APEKKNAAKAKENDENRHVCSRGDRCG) the composition is skewed to basic and acidic residues. Residues 275–294 (ILLFGPPGNGKTLLAKAVAG) constitute an intramembrane region (helical). ATP is bound at residue 279-286 (GPPGNGKT). At 295–512 (ESKQMFFNIS…LSDFSRSFGC (218 aa)) the chain is on the cytoplasmic side.

The protein belongs to the AAA ATPase family. Spastin subfamily. As to quaternary structure, homohexamer. The homohexamer is stabilized by ATP-binding. The homohexamer may adopt a ring conformation through which microtubules pass prior to being severed. Interacts with microtubules. Interacts (via N-terminus) with tubulin; the interaction is direct.

The protein resides in the membrane. It is found in the cytoplasm. Its subcellular location is the cytoskeleton. It localises to the perinuclear region. The enzyme catalyses n ATP + n H2O + a microtubule = n ADP + n phosphate + (n+1) alpha/beta tubulin heterodimers.. Its function is as follows. ATP-dependent microtubule severing protein that specifically recognizes and cuts microtubules. Probably by regulating microtubule remodeling, plays a role in new synapse formation in GABAergic DD (Dorsal D type) neurons. The chain is Spastin homolog from Caenorhabditis elegans.